Reading from the N-terminus, the 201-residue chain is Potassium-transporting ATPase KdpC subunit (201 aa).

A helical membrane pass occupies residues 9–29 (ILVMLALTLITGLLYPLAMTV). 2 stretches are compositionally biased toward polar residues: residues 73–84 (TTAADPNDSTKT) and 91–101 (AANSSGSNLGP). The disordered stretch occupies residues 73-103 (TTAADPNDSTKTVPAPYNAANSSGSNLGPTS).

This sequence belongs to the KdpC family. The system is composed of three essential subunits: KdpA, KdpB and KdpC.

It localises to the cell inner membrane. Functionally, part of the high-affinity ATP-driven potassium transport (or Kdp) system, which catalyzes the hydrolysis of ATP coupled with the electrogenic transport of potassium into the cytoplasm. This subunit acts as a catalytic chaperone that increases the ATP-binding affinity of the ATP-hydrolyzing subunit KdpB by the formation of a transient KdpB/KdpC/ATP ternary complex. This chain is Potassium-transporting ATPase KdpC subunit, found in Bradyrhizobium sp. (strain BTAi1 / ATCC BAA-1182).